The chain runs to 80 residues: MTRIGVEPSLSDVEELLKQKGYDVVRIQNEQQMDQCDCYVVTGLDSNVLGISDTTTKASVITASGMTADEICQEVEQRVQ.

The protein belongs to the UPF0180 family.

This chain is UPF0180 protein BPUM_1317, found in Bacillus pumilus (strain SAFR-032).